A 258-amino-acid polypeptide reads, in one-letter code: NAD-dependent protein deacylase (258 aa).

Residues E3–A258 form the Deacetylase sirtuin-type domain. G28–W48 lines the NAD(+) pocket. The substrate site is built by Y73 and R76. Residue Q109–D112 participates in NAD(+) binding. H127 (proton acceptor) is an active-site residue. The Zn(2+) site is built by C135, C138, C161, and C164. NAD(+) contacts are provided by residues G201 to S203 and A245.

The protein belongs to the sirtuin family. Class III subfamily. Zn(2+) is required as a cofactor.

Its subcellular location is the cytoplasm. It catalyses the reaction N(6)-acetyl-L-lysyl-[protein] + NAD(+) + H2O = 2''-O-acetyl-ADP-D-ribose + nicotinamide + L-lysyl-[protein]. The enzyme catalyses N(6)-succinyl-L-lysyl-[protein] + NAD(+) + H2O = 2''-O-succinyl-ADP-D-ribose + nicotinamide + L-lysyl-[protein]. Its function is as follows. NAD-dependent lysine deacetylase and desuccinylase that specifically removes acetyl and succinyl groups on target proteins. Modulates the activities of several proteins which are inactive in their acylated form. The sequence is that of NAD-dependent protein deacylase from Corynebacterium glutamicum (strain ATCC 13032 / DSM 20300 / JCM 1318 / BCRC 11384 / CCUG 27702 / LMG 3730 / NBRC 12168 / NCIMB 10025 / NRRL B-2784 / 534).